Here is a 30-residue protein sequence, read N- to C-terminus: GIPCGESCVYIPCLTSAVGCSCKSKVCYRN.

Positions 1-30 (GIPCGESCVYIPCLTSAVGCSCKSKVCYRN) form a cross-link, cyclopeptide (Gly-Asn). Cystine bridges form between Cys-4–Cys-20, Cys-8–Cys-22, and Cys-13–Cys-27.

Post-translationally, this is a cyclic peptide. Expressed in petals and roots but not in leaves, petioles and runners (at protein level).

Its function is as follows. Probably participates in a plant defense mechanism. The chain is Cycloviolacin-O10 from Viola odorata (Sweet violet).